A 423-amino-acid chain; its full sequence is GPI mannosyltransferase 2 (423 aa).

9 helical membrane passes run 7-27, 102-122, 128-148, 151-171, 191-211, 228-248, 298-318, 333-353, and 400-420; these read LTLI…ILSG, VILG…LVLY, IFNP…PTAT, APYT…LLSI, TGIF…AHIF, FLSA…TETV, LAMP…SHLV, PPPI…LLLF, and YWIG…AGHY.

It belongs to the PIGV family.

The protein localises to the endoplasmic reticulum membrane. It participates in glycolipid biosynthesis; glycosylphosphatidylinositol-anchor biosynthesis. In terms of biological role, mannosyltransferase involved in glycosylphosphatidylinositol-anchor biosynthesis. Transfers the second mannose to the glycosylphosphatidylinositol during GPI precursor assembly. The protein is GPI mannosyltransferase 2 (GPI18) of Cryptococcus neoformans var. neoformans serotype D (strain JEC21 / ATCC MYA-565) (Filobasidiella neoformans).